We begin with the raw amino-acid sequence, 1621 residues long: Nestin (1621 aa).

Methionine 1 is subject to N-acetylmethionine. The segment at 1 to 7 (MEGCMGE) is head. The segment at 8-43 (ESFQMWELNRRLEAYLARVKALEEQNELLSAELGGL) is coil 1A. The 306-residue stretch at 8-313 (ESFQMWELNR…TLLEAENSRL (306 aa)) folds into the IF rod domain. A linker 1 region spans residues 44–55 (RAQSADTSWRAH). Positions 56-151 (ADDELAALRA…VAHEEERVGL (96 aa)) are coil 1B. Positions 152–173 (NAQAACAPRCPAPPRGPPAPAP) are linker 12. The segment at 174–192 (EVEELARRLGEAWRGAVRG) is coil 2A. Residues 193-195 (YQE) are linker 2. Positions 196 to 313 (RVAHMETSLG…TLLEAENSRL (118 aa)) are coil 2B. Serine 311 carries the post-translational modification Phosphoserine. The segment at 314 to 1621 (QTPGGGSKTS…DRESWSSGED (1308 aa)) is tail. A Phosphothreonine modification is found at threonine 315. A Phosphoserine modification is found at serine 325. Threonine 338 bears the Phosphothreonine mark. Phosphoserine is present on residues serine 355 and serine 358. Threonine 388 is subject to Phosphothreonine. A phosphoserine mark is found at serine 398, serine 471, serine 476, serine 548, serine 564, serine 578, serine 588, serine 638, serine 680, serine 702, serine 746, and serine 768. Residues 439-490 (SVLPGPEEPGGQRQEASTGQSPEDHASLAPPLSPDHSSLEAKDGESGGSRVF) form a disordered region. A disordered region spans residues 670–788 (LEKENQEPLR…PPEKVDLEPL (119 aa)). Basic and acidic residues-rich tracts occupy residues 687–725 (EALR…LKTL), 736–770 (LETE…RSLG), and 779–788 (PPEKVDLEPL). Serine 790 is subject to Phosphoserine. A Glycyl lysine isopeptide (Lys-Gly) (interchain with G-Cter in SUMO1); alternate cross-link involves residue lysine 811. Lysine 811 participates in a covalent cross-link: Glycyl lysine isopeptide (Lys-Gly) (interchain with G-Cter in SUMO2); alternate. Serine 820, serine 831, and serine 842 each carry phosphoserine. At threonine 851 the chain carries Phosphothreonine. Serine 894, serine 905, serine 913, and serine 934 each carry phosphoserine. Positions 895–1593 (LGAWNLENLR…GSALKTSWAG (699 aa)) are disordered. Basic and acidic residues-rich tracts occupy residues 904–936 (RSPE…RSLE), 949–960 (QRWEDTVEKDQE), 980–994 (LNLR…KEEV), and 1012–1024 (GHPE…EQRG). Phosphoserine is present on serine 1016. Residues 1085-1098 (GSEPAMGESAAGAE) show a composition bias toward low complexity. Residues 1099–1110 (PGPGQGVGGLGD) show a composition bias toward gly residues. Composition is skewed to basic and acidic residues over residues 1129–1145 (LEAK…KDLE) and 1159–1184 (GKSR…RGAE). Serine 1261, serine 1282, serine 1286, serine 1310, serine 1347, serine 1409, serine 1418, and serine 1452 each carry phosphoserine. The span at 1275–1292 (PQEEGEESREESEEDELG) shows a compositional bias: acidic residues. Positions 1409–1428 (SDGFADEEESGEEGEEDQEE) are enriched in acidic residues. Low complexity-rich tracts occupy residues 1440-1453 (GSSV…SSSQ) and 1460-1470 (SDSVSVSVPWD). Residues 1486–1495 (ETESQDSAEP) show a composition bias toward polar residues. Phosphoserine occurs at positions 1496, 1498, 1577, 1617, and 1618.

Belongs to the intermediate filament family. As to quaternary structure, forms homodimers and homotetramers in vitro. In mixtures with other intermediate filament proteins such as vimentin and alpha-internexin, tis protein preferentially forms heterodimers which can assemble to form intermediate filaments if nestin does not exceed 25%. Interacts with FHOD3. Post-translationally, constitutively phosphorylated. This increases during mitosis when the cytoplasmic intermediate filament network is reorganized. As to expression, CNS stem cells.

In terms of biological role, required for brain and eye development. Promotes the disassembly of phosphorylated vimentin intermediate filaments (IF) during mitosis and may play a role in the trafficking and distribution of IF proteins and other cellular factors to daughter cells during progenitor cell division. Required for survival, renewal and mitogen-stimulated proliferation of neural progenitor cells. In Homo sapiens (Human), this protein is Nestin (NES).